The primary structure comprises 130 residues: Iron-sulfur cluster insertion protein ErpA (130 aa).

3 residues coordinate iron-sulfur cluster: C46, C116, and C118.

This sequence belongs to the HesB/IscA family. As to quaternary structure, homodimer. Iron-sulfur cluster is required as a cofactor.

Required for insertion of 4Fe-4S clusters for at least IspG. This is Iron-sulfur cluster insertion protein ErpA from Legionella pneumophila (strain Lens).